The sequence spans 308 residues: Taste receptor type 2 member 107 (308 aa).

At 1–7 (MLSAAEG) the chain is on the extracellular side. A helical membrane pass occupies residues 8–28 (ILLCVVTSEAVLGVLGDTFIA). Topologically, residues 29 to 43 (LANCMEYAKNKKLSK) are cytoplasmic. The helical transmembrane segment at 44-64 (IGFILIGLAISRIGVVWIIIL) threads the bilayer. Topologically, residues 65–94 (QGYMQVFFPHILTFGNITEYITYIWVFLNH) are extracellular. Asn80 is a glycosylation site (N-linked (GlcNAc...) asparagine). Residues 95–115 (LSVWFATNLNILYFLKIANFS) form a helical membrane-spanning segment. At 116-127 (NSVFLWLKSRVR) the chain is on the cytoplasmic side. Residues 128-148 (VVFIFLSGCLLTSWLLCFPQF) form a helical membrane-spanning segment. The Extracellular portion of the chain corresponds to 149–180 (SKMLNNSKMYWGNTSWLQQQKNVFLINQSLTN). Residues Asn153, Asn161, and Asn175 are each glycosylated (N-linked (GlcNAc...) asparagine). Residues 181–201 (LGIFFFIIVSLITCFLLIVFL) traverse the membrane as a helical segment. The Cytoplasmic segment spans residues 202 to 232 (WRHIRQMHSDGSGLRDLNTEAHVKAMRVLIS). A helical membrane pass occupies residues 233–253 (FAVLFILHFVGLSIQVLCFFL). At 254–258 (PQNNL) the chain is on the extracellular side. Residues 259-279 (LFITGLIATCLYPCGHSIILI) form a helical membrane-spanning segment. Over 280-308 (LGNKQLKQASLKALQHLTCCETKRNLSVT) the chain is Cytoplasmic.

It belongs to the G-protein coupled receptor T2R family.

It localises to the membrane. Putative taste receptor which may play a role in the perception of bitterness. The polypeptide is Taste receptor type 2 member 107 (Rattus norvegicus (Rat)).